Here is a 274-residue protein sequence, read N- to C-terminus: Beta-lactamase OXA-9 (274 aa).

Positions 1–24 are cleaved as a signal peptide; it reads MKKILLLHMLVFVSATLPISSVAS. The active-site Acyl-ester intermediate is Ser58. Lys61 carries the post-translational modification N6-carboxylysine. A substrate-binding site is contributed by 206-208; that stretch reads KSG.

The protein belongs to the class-D beta-lactamase family.

It carries out the reaction a beta-lactam + H2O = a substituted beta-amino acid. Oxacillin-hydrolyzing beta-lactamase. Confers resistance to beta-lactam antibiotics but at a significantly lower level than the TEM bla gene product. This is Beta-lactamase OXA-9 (bla) from Klebsiella aerogenes (Enterobacter aerogenes).